Consider the following 1067-residue polypeptide: [F-actin]-monooxygenase MICAL1 (1067 aa).

The segment at 1 to 489 is monooxygenase domain; the sequence is MASPTSTNPA…RDLYDVLAKE (489 aa). FAD contacts are provided by residues Cys-95, 114-116, 121-123, Phe-181, Tyr-293, and Asp-393; these read EKR and RHN. Thr-475 bears the Phosphothreonine mark. Residues 508–612 form the Calponin-homology (CH) domain; the sequence is AGTQEELLRW…YLSHFHSAFK (105 aa). At Ser-617 the chain carries Phosphoserine. The tract at residues 645–688 is disordered; it reads SRAKENAEDAGGKKLRLEMEAETPSTEVPPDPEPGVPLTPPSQH. A compositionally biased stretch (basic and acidic residues) spans 646 to 663; the sequence is RAKENAEDAGGKKLRLEM. A coiled-coil region spans residues 646 to 666; that stretch reads RAKENAEDAGGKKLRLEMEAE. Residues 671 to 684 are compositionally biased toward pro residues; that stretch reads EVPPDPEPGVPLTP. Positions 695-757 constitute an LIM zinc-binding domain; the sequence is DLCALCGEHL…LQHLPQTDHK (63 aa). Positions 697, 700, 718, 721, 724, 727, 747, and 750 each coordinate Zn(2+). The span at 755-766 shows a compositional bias: basic and acidic residues; that stretch reads DHKAEGSDRGPE. 2 disordered regions span residues 755–838 and 867–886; these read DHKA…RSCS and KEEK…VPLD. Residues 773 to 789 are compositionally biased toward polar residues; the sequence is PSENSMPPGLSTPTASQ. Phosphoserine is present on residues Ser-872, Ser-875, and Ser-876. Acidic residues predominate over residues 876 to 886; that stretch reads SEEEEEDVPLD. The tract at residues 901 to 1067 is important for interaction with RAB8A; the sequence is GTMNNYPTWR…ELALGTGAQG (167 aa). Residues 918–1067 form the bMERB domain; sequence KEEEMKRFCK…ELALGTGAQG (150 aa). 2 coiled-coil regions span residues 919-962 and 999-1027; these read EEEM…QSSS and NLEE…AADR. Ser-1057 is modified (phosphoserine).

The protein belongs to the Mical family. In terms of assembly, interacts with STK38 and STK38L. Interacts with RAB1B, RAB8A, RAB10, RAB13, RAB15 and RAB35 (in their GTP-bound forms); binding to RAB1B is of low affinity compared to other Rab proteins; at least in case of RAB8A and RAB10 can bind 2 molecules of the Rab proteins simultaneously; ternary complex formation of RAB8A, RAB13 and MICAL1 is possible. Associates with the SH3 domain of NEDD9. Interacts with VIM and PLXNA3. Interacts with GRAF1/ARHGAP26, GRAF2/ARHGAP10, RAB8A, RAB8B and RAB10; may bind simultaneously to GRAFs and Rabs and connects GRAFs to Rabs. Does not interact with RAB1 and RAB11A. It depends on FAD as a cofactor. In terms of tissue distribution, expressed in the thymus, lung, spleen, kidney, testis and hematopoietic cells.

Its subcellular location is the cytoplasm. The protein localises to the cytoskeleton. It is found in the endosome membrane. The protein resides in the midbody. It catalyses the reaction L-methionyl-[F-actin] + NADPH + O2 + H(+) = L-methionyl-(R)-S-oxide-[F-actin] + NADP(+) + H2O. It carries out the reaction NADPH + O2 + H(+) = H2O2 + NADP(+). In terms of biological role, monooxygenase that promotes depolymerization of F-actin by mediating oxidation of specific methionine residues on actin to form methionine-sulfoxide, resulting in actin filament disassembly and preventing repolymerization. In the absence of actin, it also functions as a NADPH oxidase producing H(2)O(2). Acts as a cytoskeletal regulator that connects NEDD9 to intermediate filaments. Also acts as a negative regulator of apoptosis via its interaction with STK38 and STK38L; acts by antagonizing STK38 and STK38L activation by MST1/STK4. Involved in regulation of lamina-specific connectivity in the nervous system such as the development of lamina-restricted hippocampal connections. Through redox regulation of the actin cytoskeleton controls the intracellular distribution of secretory vesicles containing L1/neurofascin/NgCAM family proteins in neurons, thereby regulating their cell surface levels. May act as Rab effector protein and play a role in vesicle trafficking. Promotes endosomal tubule extension by associating with RAB8 (RAB8A or RAB8B), RAB10 and GRAF (GRAF1/ARHGAP26 or GRAF2/ARHGAP10) on the endosomal membrane which may connect GRAFs to Rabs, thereby participating in neosynthesized Rab8-Rab10-Rab11-dependent protein export. The sequence is that of [F-actin]-monooxygenase MICAL1 (MICAL1) from Homo sapiens (Human).